A 275-amino-acid chain; its full sequence is 4-hydroxy-tetrahydrodipicolinate reductase (275 aa).

NAD(+) contacts are provided by residues 13-18 (GAAGKM), 108-110 (GTT), and 134-137 (APNF). His164 acts as the Proton donor/acceptor in catalysis. Residue His165 coordinates (S)-2,3,4,5-tetrahydrodipicolinate. Lys168 acts as the Proton donor in catalysis. (S)-2,3,4,5-tetrahydrodipicolinate is bound at residue 174–175 (GT).

The protein belongs to the DapB family.

The protein localises to the cytoplasm. The enzyme catalyses (S)-2,3,4,5-tetrahydrodipicolinate + NAD(+) + H2O = (2S,4S)-4-hydroxy-2,3,4,5-tetrahydrodipicolinate + NADH + H(+). It catalyses the reaction (S)-2,3,4,5-tetrahydrodipicolinate + NADP(+) + H2O = (2S,4S)-4-hydroxy-2,3,4,5-tetrahydrodipicolinate + NADPH + H(+). It functions in the pathway amino-acid biosynthesis; L-lysine biosynthesis via DAP pathway; (S)-tetrahydrodipicolinate from L-aspartate: step 4/4. Catalyzes the conversion of 4-hydroxy-tetrahydrodipicolinate (HTPA) to tetrahydrodipicolinate. This chain is 4-hydroxy-tetrahydrodipicolinate reductase, found in Synechocystis sp. (strain ATCC 27184 / PCC 6803 / Kazusa).